A 375-amino-acid polypeptide reads, in one-letter code: Homoserine O-succinyltransferase (375 aa).

The 311-residue stretch at 48-358 folds into the AB hydrolase-1 domain; the sequence is NAVLVCHALS…DAGHDSFLLD (311 aa). Ser-154 functions as the Nucleophile in the catalytic mechanism. Arg-224 is a binding site for substrate. Residues Asp-319 and His-352 contribute to the active site. Position 353 (Asp-353) interacts with substrate.

Belongs to the AB hydrolase superfamily. MetX family. Homodimer.

Its subcellular location is the cytoplasm. The catalysed reaction is L-homoserine + succinyl-CoA = O-succinyl-L-homoserine + CoA. The protein operates within amino-acid biosynthesis; L-methionine biosynthesis via de novo pathway; O-succinyl-L-homoserine from L-homoserine: step 1/1. Functionally, transfers a succinyl group from succinyl-CoA to L-homoserine, forming succinyl-L-homoserine. The chain is Homoserine O-succinyltransferase from Aromatoleum aromaticum (strain DSM 19018 / LMG 30748 / EbN1) (Azoarcus sp. (strain EbN1)).